A 290-amino-acid polypeptide reads, in one-letter code: 4-hydroxybenzoate octaprenyltransferase (290 aa).

A run of 8 helical transmembrane segments spans residues 23–43, 46–66, 99–119, 141–161, 163–183, 213–233, 234–254, and 268–288; these read IGAL…TPGV, LWIL…GCVV, LFVV…TMTI, LPQV…FAAV, ESVP…AVAY, LIIG…GELN, GLGW…VYQQ, and AFMN…MSYW.

The protein belongs to the UbiA prenyltransferase family. Requires Mg(2+) as cofactor.

It localises to the cell inner membrane. It catalyses the reaction all-trans-octaprenyl diphosphate + 4-hydroxybenzoate = 4-hydroxy-3-(all-trans-octaprenyl)benzoate + diphosphate. It participates in cofactor biosynthesis; ubiquinone biosynthesis. Functionally, catalyzes the prenylation of para-hydroxybenzoate (PHB) with an all-trans polyprenyl group. Mediates the second step in the final reaction sequence of ubiquinone-8 (UQ-8) biosynthesis, which is the condensation of the polyisoprenoid side chain with PHB, generating the first membrane-bound Q intermediate 3-octaprenyl-4-hydroxybenzoate. The sequence is that of 4-hydroxybenzoate octaprenyltransferase from Escherichia coli (strain SE11).